A 135-amino-acid chain; its full sequence is NADPH-dependent 7-cyano-7-deazaguanine reductase (135 aa).

C48 serves as the catalytic Thioimide intermediate. D55 acts as the Proton donor in catalysis. Substrate is bound by residues 70–72 and 89–90; these read IEL and HE.

It belongs to the GTP cyclohydrolase I family. QueF type 1 subfamily.

It is found in the cytoplasm. The catalysed reaction is 7-aminomethyl-7-carbaguanine + 2 NADP(+) = 7-cyano-7-deazaguanine + 2 NADPH + 3 H(+). It functions in the pathway tRNA modification; tRNA-queuosine biosynthesis. In terms of biological role, catalyzes the NADPH-dependent reduction of 7-cyano-7-deazaguanine (preQ0) to 7-aminomethyl-7-deazaguanine (preQ1). This Prochlorococcus marinus (strain MIT 9313) protein is NADPH-dependent 7-cyano-7-deazaguanine reductase.